Reading from the N-terminus, the 341-residue chain is Probable long-chain-alcohol O-fatty-acyltransferase 9 (341 aa).

A run of 7 helical transmembrane segments spans residues 9–29 (IIVWISAIISVSYCYYISANI), 36–56 (LFSVLPICGLFFVLPLFFSSV), 82–102 (GPLFPVAPNLIQFVCFTCFPI), 122–142 (FAIKIMIFGVVLHVYNYSHFL), 146–166 (VLLSLCFLHLYVELEILLGPL), 231–251 (MGYLVTFLVSGLFHELVYFYI), and 295–315 (RLLTMGFVVVTGGLLFFPLFI).

This sequence belongs to the wax synthase family.

The protein resides in the membrane. The catalysed reaction is a long chain fatty alcohol + a fatty acyl-CoA = a wax ester + CoA. Catalyzes the final step in the synthesis of long-chain linear esters (waxes). In Arabidopsis thaliana (Mouse-ear cress), this protein is Probable long-chain-alcohol O-fatty-acyltransferase 9.